The chain runs to 97 residues: MTSMNKGNEEKTQGANRKQLLEELNEKRESYCLVERSNEVNLLRVQKRHFSKAYQTLACMHIKESVPESTRTSWVKHDLSVHKEKRHFLPKNNAIFG.

It belongs to the SPATA45 family.

The sequence is that of Spermatogenesis-associated protein 45 (Spata45) from Mus musculus (Mouse).